The chain runs to 134 residues: Large ribosomal subunit protein bL20 (134 aa).

The protein belongs to the bacterial ribosomal protein bL20 family.

In terms of biological role, binds directly to 23S ribosomal RNA and is necessary for the in vitro assembly process of the 50S ribosomal subunit. It is not involved in the protein synthesizing functions of that subunit. In Rhizobium rhizogenes (strain K84 / ATCC BAA-868) (Agrobacterium radiobacter), this protein is Large ribosomal subunit protein bL20.